We begin with the raw amino-acid sequence, 147 residues long: NADH-quinone oxidoreductase subunit A (147 aa).

Transmembrane regions (helical) follow at residues 13-33 (LFSYAVAIVVLLAAMLGLGAV), 70-90 (YLVAMLFVIFDVESVFLFSWA), and 104-124 (VVVFVASLAAALAYVWRWGAL).

It belongs to the complex I subunit 3 family. In terms of assembly, NDH-1 is composed of 14 different subunits. Subunits NuoA, H, J, K, L, M, N constitute the membrane sector of the complex.

The protein localises to the cell inner membrane. The catalysed reaction is a quinone + NADH + 5 H(+)(in) = a quinol + NAD(+) + 4 H(+)(out). Functionally, NDH-1 shuttles electrons from NADH, via FMN and iron-sulfur (Fe-S) centers, to quinones in the respiratory chain. The immediate electron acceptor for the enzyme in this species is believed to be ubiquinone. Couples the redox reaction to proton translocation (for every two electrons transferred, four hydrogen ions are translocated across the cytoplasmic membrane), and thus conserves the redox energy in a proton gradient. This Gluconacetobacter diazotrophicus (strain ATCC 49037 / DSM 5601 / CCUG 37298 / CIP 103539 / LMG 7603 / PAl5) protein is NADH-quinone oxidoreductase subunit A.